An 82-amino-acid chain; its full sequence is UPF0213 protein SH2523 (82 aa).

One can recognise a GIY-YIG domain in the interval 2–77 (AKHYVYIVKC…KTFSRQQKLK (76 aa)).

This sequence belongs to the UPF0213 family.

The chain is UPF0213 protein SH2523 from Staphylococcus haemolyticus (strain JCSC1435).